A 2910-amino-acid polypeptide reads, in one-letter code: MAEDMPINEPLAIVGSACRFAGGVSSPSKLWDLLSNPRDVRSEILKSRFNAENYYHPDSAYHGHSNIQHSYLLEEDVAAFDSQFFGIKPVEAKAIDPQQRLLMETVYEGLESAGLTIDSLRDSDTAVYVGLMCGDYEASLLRDLSTAPVYAATGIGRSILSNRVSYFFNWHGPSMTIDTACSSSLVAVHLAAQALRSGESRVALACGSNLLLGPENYIMESKLKMLSPDGRSKMWDKDANGYARGDGVAACVLKTLSAAIEDGDDIECIIRETGVNQDGATTGITMPSATAQQALIRSTYKKAGLDLSKVNDRPQFFEAHGTGTPAGDPIEAEAISKAFFDEQYGTMVAAEPLYVGSIKTILGHTEGTAGLAALLKASLALQHSVVPPNMLLNNLSDKVAPFTKNLEILKAPKAWPSVEAGQPRRASVNSFGFGGTNAHAILESYEPRRHLQNGVTNSEAIVQFTPFVFSALSHQSLRATLSAYADHIQSNPAVNLRDMAYTLQERRSAFPYRVSFAALSADELATKIRAEVEGTKAEELGVRVSAPQTDGKRRKVLGVFTGQGAQYARMGAELLETSATARKIIQELQTCLEQLPEDLRPDFSLEEELRAAADSSRVLTGAFSFLSTVVQLLLVDLLKLAGVQFDAIVAHSSGEMAAAYAAGRLSARDAMCVAYFRGRFASKMESPNGADKKGAMLAAGMSEEDAATLCADEIFAGRVCVAAVNSSSSVTISGDEDAIDEFKLILDDENKFNRKLRVDRAYHSNHVSRRLADYVTLIQSAGVQALEPGKDAPLWISSVYGREVTTDMNLDDEYWGASVARSVQFYQALKLVLEADDYQVALEVGPHPALKGPASQTIQELGKSIPYYGVLSRGTDATVSLASSLGSLWCHLGGEQLDLTGFEKEVNDNKSSLRVVKGLPRYQWNHEASYWHESRASKKHKAQTQPFNQLLGTMMPDSAAHHLSWGHLLRASEIEWASGHQVQSQTVFPAAGYICTAFEGARVLAANRDVRLFELKDFVIHQALTFSHDDAGIEVQASIADIQRPSNDRIKAKFTYSASLGGEDLDLVAEAELHIVFGPSSERTLPHRAARPPHMISVDNERFYTFLATLGYGFEGPFKSLHTLRRKLGSSVCAVNSVPRENTFGRPLLVHPAELDGGIQSLILAYSYPDDDQLLNMHLPTSMSSIRVNPALCQSMTDISVDSRLGRNKSAGFSGDVSLYTSNSECAAIQMQGVELKPLGALTAKDDRKVFSKYQWVKNRLDGDLAACDTTVTKHHQDVLEGLERISTYYLNKLDAEVPVDSPLRKEGPHSNYLNYAHHIVELIQKGEHKVAKKEWLSDSPEDLHQATAHLSDLIDYRMMHLVGQQMPRVLRGETNMLEEMRVSNILDDYYKGAFGSREAGLWIGKIISQLAERYPHLNILEVGAGTGGATTRVLQGLSNKFLSYTFTDVSSGFFEGAAEMFSEHKDRMVFKTFDCGQDPVTQGYAEGTCDVVVAFLVIHATPDLELTMRNIRKLLKPGGLLVVGEGTNNGQPYGSAGFIFGSLPGWWLGADTGRPLSPFVSYSEWERLLKASAFSGIDSTAPQAFQDILGMTVFAAQAVDDRVNFLREPLNPDVLSQSSAAIEYPIKNLVVVGGSTERTRPLVASVTDTLKNHSAQVHTFETLSAVDFSLVDEDATVVSLSELDKPVFQDLTPDEWMAFKTLFSCPTRLFWVTSGRLSEEPFSNMTVGFARTAVFETPALRFQNVDISNLETLTPQDLAEKVLRFHASTSPVPADLKQFAWPLEPEIVIDAQGEELVPRLRHIAERNDRYNSARRPITNETDITKTPATLHNDREGWKLKELPGCASPAEHPGDRLSLEVTHSVLSALRTPYGHQFLVFGIERQSQTRFMALVPTLISVVDVSKGSAIPLPTSTLADSELLTSLAATLVSMAVVDPLMEGDTLVVQNATELFASTIATLATSKKIRIVFVADFARPNVPESWVKLEPYVTQSEIAEILPANTACFVDLSIEASENASVIPSSLPLHHRKENVSTLYSPLGWESGSSSAGTALGQLLHRAWFYAQQEAFAHRQNNATSQVVGITDLLEGLNPGNPATVIDWTLSKTHPVHVSRLDSVVFFKGDKTYWLCGLSGALGVSLVDWMIERGAKYLVLTSRNPNISPDWIAGHKRNGVTVTIVPCDVTNEPAIRAAHQFICETLPPIVGVLNGAMVLRDVSIRNMSYELMSDVFRPKVHGSIHLDRIFRDEPLDFFILFSSINCVIGNLGQANYAAANTFMCSLAAQRRKRGLAATALNVGAIIGAGYMERESSKALDLTVSKMALMHLSEQDYHQLFAEGIDSGRPGSGDEAELTTGLLDIPAATDTENTPKWHSNPAFLDFIVHQVEKNGADSGNEVVASVQDQLAACQSRSEVLAVVKGRFAMQLRNVLQMTTADEDLMALRSRDIGLDSLISVDIRSWFLKNFEVSVPVLKIMGNDTMAELAELAAEQAPASLLPGLGGEAPAPTEEAQANNAASQPVPLTVVPQSDETGSSSADSNHDGSPGESRGGSTGYTTPTTPDPHSTKGPIRIDWDAEIALPNAANIAIEIVPVARPQKIVLTGVSGLLGRSLLLRLLEDASVKKIFCIAVRRLEERLQSEELLLDDRVQYFSGNLEQPRLGLSEEDAIAIFSQADAVIHNGADTSHLKFYPEIKAANAGSTKELISLCMARKVPIHYISTVGVALFGNYESFPQVSIAAHHPPIDGSHGYVAAKWVSERLLEELQRQHGVNVWIHRPSTIVREGADNENAAAQTDWMNALMAYMRKMQAVPVMKNLRGALDFVYVKNAADSILTAVLENKPVGASYTHQVGDIVIPLDNLKEFIEDTGALNVEELPIEKWSARAVTVGLNRGVAALIDSMDDPGQPHYPRLLRQ.

Residues 8–444 (NEPLAIVGSA…GTNAHAILES (437 aa)) enclose the Ketosynthase family 3 (KS3) domain. Active-site for beta-ketoacyl synthase activity residues include Cys181, His320, and His364. Residues 559–875 (VFTGQGAQYA…PYYGVLSRGT (317 aa)) form an acyl transferase (AT) domain region. An N-terminal hotdog fold region spans residues 948 to 1082 (NQLLGTMMPD…LHIVFGPSSE (135 aa)). Residues 948-1245 (NQLLGTMMPD…LKPLGALTAK (298 aa)) form the PKS/mFAS DH domain. Residues 949-1242 (QLLGTMMPDS…GVELKPLGAL (294 aa)) form a dehydratase (DH) domain region. The active-site Proton acceptor; for dehydratase activity is the His980. Positions 1095-1245 (MISVDNERFY…LKPLGALTAK (151 aa)) are C-terminal hotdog fold. Asp1156 functions as the Proton donor; for dehydratase activity in the catalytic mechanism. Residues 1399-1586 (EAGLWIGKII…GIDSTAPQAF (188 aa)) form a methyltransferase (MT) domain region. Residues 2125 to 2298 (TYWLCGLSGA…AATALNVGAI (174 aa)) form a ketoreductase (KR)domain region. Positions 2406 to 2488 (QSRSEVLAVV…ELAELAAEQA (83 aa)) constitute a Carrier domain. Residue Ser2448 is modified to O-(pantetheine 4'-phosphoryl)serine. Residues 2492–2565 (LLPGLGGEAP…TPDPHSTKGP (74 aa)) form a disordered region. Residues 2522–2534 (VPQSDETGSSSAD) are compositionally biased toward polar residues. Low complexity predominate over residues 2550–2559 (GYTTPTTPDP). A reductase (R) domain region spans residues 2597 to 2826 (LTGVSGLLGR…DFVYVKNAAD (230 aa)).

The protein operates within secondary metabolite biosynthesis. Its function is as follows. Highly reducing polyketide synthase; part of the gene cluster that mediates the biosynthesis of calbistrin A and related compounds. Calbistrin A is a secondary metabolite with an interesting structure that was recently found to have bioactivity against leukemia cells. It consists of two polyketides linked by an ester bond: a bicyclic decalin containing polyketide and a linear 12 carbon dioic acid structure. The polyketide synthase calA is probably responsible for forming the decalin moiety. Because calA lacks a designated enoylreductase (ER) domain, the required activity is provided by the trans-enoyl reductase calK. Following release from the PKS, calF then probably catalyzes the oxidation and the subsequent Diels Alder cycloisomerization that lead to the formation of the decalin moiety. The decalin polyketide backbone includes two C-methyl groups, at C7 and C11 in backbone, of which the C7 position is probably methylated by the methyltransferase domain of calA. A candidate for adding the methyl group at C11, if not done by CalA, is the cluster methyltransferase calH. Several additional tailoring enzymes within the cluster could be involved in the modification of the decalin polyketide product. Those include the 3 cytochrome P450 monooxygenases CalE, CalG and CalL, of which one might be responsible for the introduction of the extra hydroxyl group attached to the backbone of the decalin moiety, at position C9 in the backbone, that allows for attachment of the linear moiety. One tailoring enzyme activity that is expected to be involved in biosynthesis of calbistrin is an acyltransferase for connecting the two polyketide synthase products, and which could be performed by the cluster acyltransferase calJ. The enzyme responsible for the biosynthesis of the linear moiety, probably a second PKS, has not been identified yet. This is Highly reducing polyketide synthase calA from Penicillium decumbens.